A 218-amino-acid polypeptide reads, in one-letter code: Outer-membrane lipoprotein LolB (218 aa).

Residues methionine 1–glycine 20 form the signal peptide. The N-palmitoyl cysteine moiety is linked to residue cysteine 21. A lipid anchor (S-diacylglycerol cysteine) is attached at cysteine 21.

The protein belongs to the LolB family. As to quaternary structure, monomer.

Its subcellular location is the cell outer membrane. Its function is as follows. Plays a critical role in the incorporation of lipoproteins in the outer membrane after they are released by the LolA protein. The polypeptide is Outer-membrane lipoprotein LolB (Xanthomonas campestris pv. campestris (strain B100)).